A 407-amino-acid chain; its full sequence is Betaine--homocysteine S-methyltransferase 1 (407 aa).

One can recognise a Hcy-binding domain in the interval 11 to 314 (KGILERLNSG…YHIRAIAEEL (304 aa)). Residues lysine 40, lysine 93, and lysine 98 each carry the N6-succinyllysine modification. Cysteine 217 provides a ligand contact to Zn(2+). N6-succinyllysine is present on residues lysine 232 and lysine 241. The Zn(2+) site is built by cysteine 299 and cysteine 300. Serine 330 is modified (phosphoserine). N6-succinyllysine occurs at positions 340 and 377.

In terms of assembly, homotetramer. The cofactor is Zn(2+).

Its subcellular location is the cytoplasm. The protein localises to the cytosol. It localises to the nucleus. It carries out the reaction L-homocysteine + glycine betaine = N,N-dimethylglycine + L-methionine. It functions in the pathway amine and polyamine degradation; betaine degradation; sarcosine from betaine: step 1/2. Its pathway is amino-acid biosynthesis; L-methionine biosynthesis via de novo pathway; L-methionine from L-homocysteine (BhmT route): step 1/1. Involved in the regulation of homocysteine metabolism. Converts betaine and homocysteine to dimethylglycine and methionine, respectively. This reaction is also required for the irreversible oxidation of choline. The sequence is that of Betaine--homocysteine S-methyltransferase 1 (BHMT) from Bos taurus (Bovine).